The sequence spans 58 residues: MSNVIVKENESLDSALRRFKRNCAKAGIQQEIRKREHYEKPSVRRKKKSEAARKRKFN.

The span at 32–42 (IRKREHYEKPS) shows a compositional bias: basic and acidic residues. The segment at 32-58 (IRKREHYEKPSVRRKKKSEAARKRKFN) is disordered. The segment covering 43–58 (VRRKKKSEAARKRKFN) has biased composition (basic residues).

The protein belongs to the bacterial ribosomal protein bS21 family.

The chain is Small ribosomal subunit protein bS21 from Lachnospira eligens (strain ATCC 27750 / DSM 3376 / VPI C15-48 / C15-B4) (Eubacterium eligens).